A 222-amino-acid chain; its full sequence is 2-hydroxy-3-keto-5-methylthiopentenyl-1-phosphate phosphatase (222 aa).

It belongs to the HAD-like hydrolase superfamily. MtnX family.

It catalyses the reaction 2-hydroxy-5-methylsulfanyl-3-oxopent-1-enyl phosphate + H2O = 1,2-dihydroxy-5-(methylsulfanyl)pent-1-en-3-one + phosphate. It functions in the pathway amino-acid biosynthesis; L-methionine biosynthesis via salvage pathway; L-methionine from S-methyl-5-thio-alpha-D-ribose 1-phosphate: step 4/6. Its function is as follows. Dephosphorylates 2-hydroxy-3-keto-5-methylthiopentenyl-1-phosphate (HK-MTPenyl-1-P) yielding 1,2-dihydroxy-3-keto-5-methylthiopentene (DHK-MTPene). The polypeptide is 2-hydroxy-3-keto-5-methylthiopentenyl-1-phosphate phosphatase (Brevibacillus brevis (strain 47 / JCM 6285 / NBRC 100599)).